Consider the following 289-residue polypeptide: CCR4-associated factor 16 (289 aa).

The ABC transporter domain occupies 7–249 (IEVRNLTYKF…SEVVNAKVNG (243 aa)). An ATP-binding site is contributed by 41–48 (GANGAGKS).

This sequence belongs to the ABC transporter superfamily. In terms of assembly, interacts with CCR4 and SSN2.

Its subcellular location is the cytoplasm. The protein resides in the nucleus. The polypeptide is CCR4-associated factor 16 (CAF16) (Saccharomyces cerevisiae (strain ATCC 204508 / S288c) (Baker's yeast)).